Here is a 244-residue protein sequence, read N- to C-terminus: MMNLLSSDGVQVLPRPFTLNERRREVRSFVLRQGHFTPAQKRAFDHYWPRFGVDFIGQLRDLDVLFGRSAPKVLEVGFGNGAALRFAAQHEPRYDYIGIEVYAPGVGRLLNGLAEDGSRHVRLYHYDAVEVLNKEIVDGALDEIRIYFPDPWHKKRHHKRRLIQPLFATLLVRKLRVGGCLHMATDWADYAEQMWDVLDATPGLVNRAGLRGQVPCPDWRVQTRFERRGQNLGHRVWNLLYDRV.

The S-adenosyl-L-methionine site is built by E75, E100, D127, and D150. Residue D150 is part of the active site. Residues K154, D186, and 223–226 contribute to the substrate site; that span reads TRFE.

Belongs to the class I-like SAM-binding methyltransferase superfamily. TrmB family.

The catalysed reaction is guanosine(46) in tRNA + S-adenosyl-L-methionine = N(7)-methylguanosine(46) in tRNA + S-adenosyl-L-homocysteine. It participates in tRNA modification; N(7)-methylguanine-tRNA biosynthesis. Catalyzes the formation of N(7)-methylguanine at position 46 (m7G46) in tRNA. The polypeptide is tRNA (guanine-N(7)-)-methyltransferase (Xylella fastidiosa (strain M23)).